A 377-amino-acid polypeptide reads, in one-letter code: Nucleosome assembly protein 1;3 (377 aa).

A coiled-coil region spans residues 26 to 80; sequence VNVLKNKLQGLTGKHSNVLENLSPNVRKRVEVLREIQTQHDELEAKFFEERAALE. Positions 47-62 match the Nuclear export signal motif; that stretch reads LSPNVRKRVEVLREIQ. Residues 223–228 carry the Nuclear localization signal motif; that stretch reads KKKPKK. Positions 298 to 377 are disordered; that stretch reads EAAQDEDYID…GERPPECKQQ (80 aa). The segment covering 300–341 has biased composition (acidic residues); the sequence is AQDEDYIDLEDDEDEEDDEDEDEDEEDEEEEDEDEDDDDEDE. Positions 345-357 are enriched in basic residues; it reads KTKKKSSAGRKRS. Cys374 is subject to Cysteine methyl ester. Residue Cys374 is the site of S-farnesyl cysteine attachment. The propeptide at 375 to 377 is removed in mature form; that stretch reads KQQ.

This sequence belongs to the nucleosome assembly protein (NAP) family. In terms of assembly, can form homomeric and heteromeric protein complexes with NAP1;4. Binds histones H2A and H2B in vivo. Also able to bind histones H1 and H4 in vitro. Interacts with CYCB1;1 and with alpha tubulin.

The protein localises to the nucleus. It is found in the cytoplasm. Functionally, may modulate chromatin structure by regulation of nucleosome assembly/disassembly. Could function together with B-type cyclins in the regulation of microtubule dynamics. The sequence is that of Nucleosome assembly protein 1;3 (NAP1;3) from Nicotiana tabacum (Common tobacco).